The sequence spans 95 residues: NADH-quinone oxidoreductase subunit K (95 aa).

Helical transmembrane passes span 1–21 (MSYL…VLTR), 25–45 (ILVF…LVGF), and 59–79 (MVIA…VAIF).

Belongs to the complex I subunit 4L family. NDH-1 is composed of 15 different subunits. Subunits NuoA, H, J, K, L, M, N constitute the membrane sector of the complex.

Its subcellular location is the cell inner membrane. It carries out the reaction a quinone + NADH + 5 H(+)(in) = a quinol + NAD(+) + 4 H(+)(out). In terms of biological role, NDH-1 shuttles electrons from NADH, via FMN and iron-sulfur (Fe-S) centers, to quinones in the respiratory chain. The immediate electron acceptor for the enzyme in this species is believed to be a menaquinone. Couples the redox reaction to proton translocation (for every two electrons transferred, four hydrogen ions are translocated across the cytoplasmic membrane), and thus conserves the redox energy in a proton gradient. The polypeptide is NADH-quinone oxidoreductase subunit K (Thermus thermophilus (strain ATCC BAA-163 / DSM 7039 / HB27)).